Here is a 583-residue protein sequence, read N- to C-terminus: Proteasome-associated ATPase (583 aa).

Residues 1–19 (METPNQDSGRTPTEQSAAN) show a composition bias toward polar residues. The tract at residues 1-22 (METPNQDSGRTPTEQSAANDLS) is disordered. Residues 24–75 (ADRQVNILRDKLRHIDRQLAAATQNNTKLVSMLETAKAEILRLKNALDQEGQ) are a coiled coil. 271-276 (GCGKTL) contacts ATP. The tract at residues 582–583 (YL) is docks into pockets in the proteasome alpha-ring.

The protein belongs to the AAA ATPase family. As to quaternary structure, homohexamer. Assembles into a hexameric ring structure that caps the 20S proteasome core. Strongly interacts with the prokaryotic ubiquitin-like protein Pup through a hydrophobic interface; the interacting region of ARC lies in its N-terminal coiled-coil domain. There is one Pup binding site per ARC hexamer ring. Upon ATP-binding, the C-terminus of ARC interacts with the alpha-rings of the proteasome core, possibly by binding to the intersubunit pockets.

It functions in the pathway protein degradation; proteasomal Pup-dependent pathway. In terms of biological role, ATPase which is responsible for recognizing, binding, unfolding and translocation of pupylated proteins into the bacterial 20S proteasome core particle. May be essential for opening the gate of the 20S proteasome via an interaction with its C-terminus, thereby allowing substrate entry and access to the site of proteolysis. Thus, the C-termini of the proteasomal ATPase may function like a 'key in a lock' to induce gate opening and therefore regulate proteolysis. The protein is Proteasome-associated ATPase of Pseudarthrobacter chlorophenolicus (strain ATCC 700700 / DSM 12829 / CIP 107037 / JCM 12360 / KCTC 9906 / NCIMB 13794 / A6) (Arthrobacter chlorophenolicus).